Consider the following 147-residue polypeptide: Hemoglobin subunit beta (147 aa).

Position 2 is an N-acetylvaline (valine 2). The Globin domain occupies 3–147 (HLTGEEKAAV…VANALAHKYH (145 aa)). The residue at position 13 (threonine 13) is a Phosphothreonine. The residue at position 45 (serine 45) is a Phosphoserine. At lysine 60 the chain carries N6-acetyllysine. Histidine 64 contributes to the heme b binding site. Lysine 83 is modified (N6-acetyllysine). Histidine 93 contributes to the heme b binding site. Residue cysteine 94 is modified to S-nitrosocysteine. At lysine 145 the chain carries N6-acetyllysine.

Belongs to the globin family. Heterotetramer of two alpha chains and two beta chains. As to expression, red blood cells.

Functionally, involved in oxygen transport from the lung to the various peripheral tissues. The protein is Hemoglobin subunit beta (HBB) of Ateles belzebuth (White-bellied spider monkey).